The sequence spans 129 residues: DNA-directed RNA polymerase III subunit rpc9 (129 aa).

This sequence belongs to the eukaryotic RPC9 RNA polymerase subunit family. As to quaternary structure, component of the RNA polymerase III (Pol III) complex.

It is found in the cytoplasm. Its subcellular location is the nucleus. Functionally, DNA-dependent RNA polymerase catalyzes the transcription of DNA into RNA using the four ribonucleoside triphosphates as substrates. Specific peripheric component of RNA polymerase III which synthesizes small RNAs, such as 5S rRNA and tRNAs. This chain is DNA-directed RNA polymerase III subunit rpc9 (rpc17), found in Schizosaccharomyces pombe (strain 972 / ATCC 24843) (Fission yeast).